The sequence spans 673 residues: Outer spore wall assembly protein SHE10 (673 aa).

A signal peptide spans 1 to 24 (MRRVRGVGNLLVTILVVLIGFKQA). Residues 503–568 (ILRSQANIAF…LALEQGQGQE (66 aa)) are a coiled coil. 2 disordered regions span residues 530–551 (LEQE…AENE) and 587–673 (TPLG…SQAN). Acidic residues-rich tracts occupy residues 593–605 (DNTD…DDAD) and 612–629 (GDSE…EEDA). Positions 617-647 (NFYDSYEGDEEDASRELERLERESAERETLD) form a coiled coil. Over residues 630–673 (SRELERLERESAERETLDRLELGQRQKLQEEQHRDELHHSSQAN) the composition is skewed to basic and acidic residues.

Belongs to the SHE10 family. As to quaternary structure, component of the mitochondria-localized RNase mitochondrial RNA-processing (RNase MRP) composed of one single RNA encoded by the NME1 gene and at least 31 proteins. Absent in the nucleus-localized RNase MRP (NuMRP).

Its subcellular location is the mitochondrion. Involved in spore wall assembly. May be a component of the mitochondrial RNase MRP (MtMRP), a ribonucleoprotein endoribonuclease involved in the cleaving RNA transcripts to generate primers for DNA replication in mitochondria. This chain is Outer spore wall assembly protein SHE10, found in Lachancea thermotolerans (strain ATCC 56472 / CBS 6340 / NRRL Y-8284) (Yeast).